The primary structure comprises 151 residues: Ribosome maturation factor RimP (151 aa).

It belongs to the RimP family.

It is found in the cytoplasm. Functionally, required for maturation of 30S ribosomal subunits. In Alcanivorax borkumensis (strain ATCC 700651 / DSM 11573 / NCIMB 13689 / SK2), this protein is Ribosome maturation factor RimP.